Reading from the N-terminus, the 141-residue chain is Nucleoside diphosphate kinase (141 aa).

ATP is bound by residues Lys-11, Phe-59, Arg-87, Thr-93, Arg-104, and Asn-114. Residue His-117 is the Pros-phosphohistidine intermediate of the active site.

The protein belongs to the NDK family. In terms of assembly, homotetramer. The cofactor is Mg(2+).

The protein resides in the cytoplasm. The enzyme catalyses a 2'-deoxyribonucleoside 5'-diphosphate + ATP = a 2'-deoxyribonucleoside 5'-triphosphate + ADP. It catalyses the reaction a ribonucleoside 5'-diphosphate + ATP = a ribonucleoside 5'-triphosphate + ADP. In terms of biological role, major role in the synthesis of nucleoside triphosphates other than ATP. The ATP gamma phosphate is transferred to the NDP beta phosphate via a ping-pong mechanism, using a phosphorylated active-site intermediate. In Histophilus somni (strain 129Pt) (Haemophilus somnus), this protein is Nucleoside diphosphate kinase.